The following is a 197-amino-acid chain: Recombination protein RecR (197 aa).

The C4-type zinc finger occupies 54 to 69 (CQQCNNYTEQTLCTLC). The Toprim domain occupies 77–172 (TLLCVVESPA…NISQLAHGIP (96 aa)).

It belongs to the RecR family.

May play a role in DNA repair. It seems to be involved in an RecBC-independent recombinational process of DNA repair. It may act with RecF and RecO. The sequence is that of Recombination protein RecR from Legionella pneumophila (strain Paris).